A 736-amino-acid polypeptide reads, in one-letter code: Catalase-peroxidase (736 aa).

A cross-link (tryptophyl-tyrosyl-methioninium (Trp-Tyr) (with M-250)) is located at residues 96 to 224 (WHSAGTYRTG…LAAVQMGLIY (129 aa)). The active-site Proton acceptor is His-97. Positions 224–250 (YVNPEGPDGNPDPVASGRDVRETFGRM) form a cross-link, tryptophyl-tyrosyl-methioninium (Tyr-Met) (with W-96). His-265 provides a ligand contact to heme b.

The protein belongs to the peroxidase family. Peroxidase/catalase subfamily. Homodimer or homotetramer. Heme b is required as a cofactor. Post-translationally, formation of the three residue Trp-Tyr-Met cross-link is important for the catalase, but not the peroxidase activity of the enzyme.

The catalysed reaction is H2O2 + AH2 = A + 2 H2O. The enzyme catalyses 2 H2O2 = O2 + 2 H2O. Functionally, bifunctional enzyme with both catalase and broad-spectrum peroxidase activity. The polypeptide is Catalase-peroxidase (Pelobacter propionicus (strain DSM 2379 / NBRC 103807 / OttBd1)).